A 320-amino-acid polypeptide reads, in one-letter code: Mitochondrial thiamine pyrophosphate carrier (320 aa).

3 Solcar repeats span residues 13–106, 116–202, and 214–309; these read NTKF…LTEL, REFS…LKHL, and NENL…FCNV. A helical membrane pass occupies residues 19–39; sequence AVAGSVSGLVTRALISPFDVI. Serine 51 carries the phosphoserine modification. 4 helical membrane-spanning segments follow: residues 87–107, 122–142, 173–193, and 220–240; these read ILSIGYGAVQFLSFEMLTELV, FVCGGLAACMATLTVHPVDVL, VFYKGLAPTLIAIFPYAGLQF, and LLCGSGAGVISKTLTYPLDLF. A Substrate recognition motif is present at residues 241 to 246; that stretch reads KKRLQV. Residues 293–313 form a helical membrane-spanning segment; the sequence is ALSTGFMFFSYEFFCNVFHCM.

The protein belongs to the mitochondrial carrier (TC 2.A.29) family. As to expression, expressed in all tissues examined except for placenta. Highest levels in colon, kidney, lung, testis, spleen, and brain.

The protein resides in the mitochondrion membrane. It carries out the reaction thiamine phosphate(out) + thiamine diphosphate(in) = thiamine phosphate(in) + thiamine diphosphate(out). Its function is as follows. Mitochondrial transporter mediating uptake of thiamine diphosphate into mitochondria. It is not clear if the antiporter activity is affected by the membrane potential or by the proton electrochemical gradient. This chain is Mitochondrial thiamine pyrophosphate carrier, found in Homo sapiens (Human).